The chain runs to 33 residues: Vejocalcin (33 aa).

Intrachain disulfides connect cysteine 3–cysteine 17, cysteine 10–cysteine 21, and cysteine 16–cysteine 32. The interval 23–24 (RR) is essential for stimulation of [3H]ryanodine binding to RYR1.

As to expression, expressed by the venom gland.

It localises to the secreted. Functionally, this toxin stabilizes ryanodine receptor 1 (RyR1) opening in a long-lasting subconductance state (60% of the full conductance state). Furthermore, it triggers calcium release from sarcoplasmic vesicles (31 nM are enough to induce a sharp release, and 65% of the total calcium is released after toxin (100 nM) addition) probably by acting as a cell-penetrating peptide (CPP). In addition, it has been shown to dose-dependently stimulate ryanodine binding to RyR1 (EC(50)=3.7 nM). It also augments the bell-shaped calcium-[3H]ryanodine binding curve that is maximal at about 10 uM calcium concentration. It binds a different site as ryanodine. It acts synergistically with caffeine. In vivo, intracerebroventricular injection into mice induces neurotoxic symptoms, followed by death. The chain is Vejocalcin from Vaejovis mexicanus (Mexican scorpion).